Here is a 434-residue protein sequence, read N- to C-terminus: Homogentisate 1,2-dioxygenase (434 aa).

The Proton acceptor role is filled by His-289. Residues His-332 and Glu-338 each contribute to the Fe cation site. Tyr-347 and His-368 together coordinate homogentisate. Residue His-368 coordinates Fe cation.

Belongs to the homogentisate dioxygenase family. As to quaternary structure, hexamer; dimer of trimers. It depends on Fe cation as a cofactor.

It carries out the reaction homogentisate + O2 = 4-maleylacetoacetate + H(+). The protein operates within amino-acid degradation; L-phenylalanine degradation; acetoacetate and fumarate from L-phenylalanine: step 4/6. Its function is as follows. Involved in the catabolism of homogentisate (2,5-dihydroxyphenylacetate or 2,5-OH-PhAc), a central intermediate in the degradation of phenylalanine and tyrosine. Catalyzes the oxidative ring cleavage of the aromatic ring of homogentisate to yield maleylacetoacetate. This Pseudomonas syringae pv. syringae (strain B728a) protein is Homogentisate 1,2-dioxygenase.